We begin with the raw amino-acid sequence, 462 residues long: Sonic hedgehog protein (462 aa).

Residues 1-23 (MLLLARCLLLVLVSSLLVCSGLA) form the signal peptide. Cys-24 carries the N-palmitoyl cysteine lipid modification. Residues 32-38 (KRRHPKK) carry the Cardin-Weintraub motif. Residues Glu-89, Glu-90, Asp-95, Thr-125, Glu-126, Asp-129, and Asp-131 each contribute to the Ca(2+) site. His-140, Asp-147, and His-182 together coordinate Zn(2+). The Cholesterol glycine ester moiety is linked to residue Gly-197. Asn-278 carries N-linked (GlcNAc...) asparagine glycosylation. Disordered regions lie at residues 279–302 (DSAT…LGPR) and 395–414 (TDRG…GRVA). Positions 283–292 (GEPEASSGSG) are enriched in low complexity. The segment covering 400-412 (DSGGGDRGGGGGR) has biased composition (gly residues).

It belongs to the hedgehog family. In terms of assembly, multimer. As to quaternary structure, interacts with HHATL/GUP1 which negatively regulates HHAT-mediated palmitoylation of the SHH N-terminus. Interacts with BOC and CDON. Interacts with HHIP. Interacts with DISP1 via its cholesterol anchor. Interacts with SCUBE2. Interacts with glypican GPC3. The C-terminal domain displays an autoproteolysis activity and a cholesterol transferase activity. Both activities result in the cleavage of the full-length protein and covalent attachment of a cholesterol moiety to the C-terminal of the newly generated N-terminal fragment (ShhN). Cholesterylation is required for the sonic hedgehog protein N-product targeting to lipid rafts and multimerization. ShhN is the active species in both local and long-range signaling, whereas the C-product (ShhC) is degraded in the endoplasmic reticulum. In terms of processing, N-palmitoylation by HHAT of ShhN is required for sonic hedgehog protein N-product multimerization and full activity. It is a prerequisite for the membrane-proximal positioning and the subsequent shedding of this N-terminal peptide. Post-translationally, the lipidated N- and C-terminal peptides of ShhNp can be cleaved (shedding). The N-terminal palmitoylated peptide is cleaved at the Cardin-Weintraub (CW) motif site. The cleavage reduced the interactions with heparan sulfate. The cleavage is enhanced by SCUBE2.

Its subcellular location is the endoplasmic reticulum membrane. The protein localises to the golgi apparatus membrane. The protein resides in the secreted. It localises to the cell membrane. The enzyme catalyses glycyl-L-cysteinyl-[protein] + cholesterol + H(+) = [protein]-C-terminal glycyl cholesterol ester + N-terminal L-cysteinyl-[protein]. The C-terminal part of the sonic hedgehog protein precursor displays an autoproteolysis and a cholesterol transferase activity. Both activities result in the cleavage of the full-length protein into two parts (ShhN and ShhC) followed by the covalent attachment of a cholesterol moiety to the C-terminal of the newly generated ShhN. Both activities occur in the endoplasmic reticulum. Once cleaved, ShhC is degraded in the endoplasmic reticulum. In terms of biological role, the dually lipidated sonic hedgehog protein N-product (ShhNp) is a morphogen which is essential for a variety of patterning events during development. Induces ventral cell fate in the neural tube and somites. Involved in the patterning of the anterior-posterior axis of the developing limb bud. Essential for axon guidance. Binds to the patched (PTCH1) receptor, which functions in association with smoothened (SMO), to activate the transcription of target genes. In the absence of SHH, PTCH1 represses the constitutive signaling activity of SMO. The chain is Sonic hedgehog protein from Homo sapiens (Human).